The chain runs to 1009 residues: Lateral signaling target protein 2 homolog (1009 aa).

3 disordered regions span residues 313–460, 497–629, and 777–905; these read PVGS…EEQL, ASED…KRCS, and MQRN…TATA. Low complexity-rich tracts occupy residues 327–348, 364–398, and 406–427; these read SSTP…SSSG, QRNN…TPTA, and PSHS…HPPA. Residues 430–458 show a composition bias toward acidic residues; that stretch reads SDGDDEDEDEEEDEEEDELEDTEDDTDEE. The residue at position 541 (Ser541) is a Phosphoserine. A compositionally biased stretch (basic and acidic residues) spans 544-558; the sequence is SEPHRDQGETIKSTE. Residues 562–575 show a composition bias toward low complexity; sequence QQQQQQEQQTLQSS. Basic residues-rich tracts occupy residues 576 to 601 and 609 to 627; these read RQRH…HHST and QPHH…GRKR. Positions 780–798 are enriched in low complexity; that stretch reads NNTIDNPSSSNTSSSSATT. Ser807 carries the phosphoserine modification. Residues 822–878 show a composition bias toward low complexity; that stretch reads VHQQEQEMQQQQDHQQQQHQHQVQVQLQRQRNNSVGSNTPSSASSTSSSSEQNSPVS. Residues 917–977 form an FYVE-type zinc finger; sequence DGKAPRCMSC…VCRDCYVREV (61 aa). Zn(2+) is bound by residues Cys923, Cys926, Cys939, Cys942, Cys947, Cys950, Cys969, and Cys972.

It belongs to the lst-2 family.

Its function is as follows. Negative regulator of epidermal growth factor receptor (EGFR) signaling. The protein is Lateral signaling target protein 2 homolog of Drosophila persimilis (Fruit fly).